The sequence spans 80 residues: Pancreatic polypeptide (80 aa).

An N-terminal signal peptide occupies residues 1-25 (MPPRWASLLLLACSLLLLAVPPGTA). Tyr61 bears the Tyrosine amide mark. The propeptide occupies 65-80 (SSSRVLCEEPMGAAGC).

This sequence belongs to the NPY family.

It is found in the secreted. Functionally, hormone secreted by pancreatic cells that acts as a regulator of pancreatic and gastrointestinal functions. The protein is Pancreatic polypeptide (PPY) of Gallus gallus (Chicken).